The chain runs to 364 residues: tRNA 2-selenouridine synthase (364 aa).

Positions 14-137 (LIADTPIIDV…LRQTAIQATI (124 aa)) constitute a Rhodanese domain. Catalysis depends on C97, which acts as the S-selanylcysteine intermediate.

The protein belongs to the SelU family. In terms of assembly, monomer.

It carries out the reaction 5-methylaminomethyl-2-thiouridine(34) in tRNA + selenophosphate + (2E)-geranyl diphosphate + H2O + H(+) = 5-methylaminomethyl-2-selenouridine(34) in tRNA + (2E)-thiogeraniol + phosphate + diphosphate. It catalyses the reaction 5-methylaminomethyl-2-thiouridine(34) in tRNA + (2E)-geranyl diphosphate = 5-methylaminomethyl-S-(2E)-geranyl-thiouridine(34) in tRNA + diphosphate. The enzyme catalyses 5-methylaminomethyl-S-(2E)-geranyl-thiouridine(34) in tRNA + selenophosphate + H(+) = 5-methylaminomethyl-2-(Se-phospho)selenouridine(34) in tRNA + (2E)-thiogeraniol. The catalysed reaction is 5-methylaminomethyl-2-(Se-phospho)selenouridine(34) in tRNA + H2O = 5-methylaminomethyl-2-selenouridine(34) in tRNA + phosphate. In terms of biological role, involved in the post-transcriptional modification of the uridine at the wobble position (U34) of tRNA(Lys), tRNA(Glu) and tRNA(Gln). Catalyzes the conversion of 2-thiouridine (S2U-RNA) to 2-selenouridine (Se2U-RNA). Acts in a two-step process involving geranylation of 2-thiouridine (S2U) to S-geranyl-2-thiouridine (geS2U) and subsequent selenation of the latter derivative to 2-selenouridine (Se2U) in the tRNA chain. The polypeptide is tRNA 2-selenouridine synthase (Escherichia coli O45:K1 (strain S88 / ExPEC)).